The sequence spans 626 residues: (+)-3-carene synthase 1, chloroplastic (626 aa).

The transit peptide at 1–45 (MSLISAVPLASSCVSKSLISSVREHTALRRAIATLQMSRRGKSVA) directs the protein to the chloroplast. Mg(2+) is bound by residues Asp377, Asp381, and Asp529. Residues 377–381 (DDMYD) carry the DDXXD motif motif.

Belongs to the terpene synthase family. Tpsd subfamily. Mg(2+) serves as cofactor. It depends on Mn(2+) as a cofactor.

It is found in the plastid. The protein localises to the chloroplast. It catalyses the reaction (2E)-geranyl diphosphate = (+)-car-3-ene + diphosphate. The catalysed reaction is (2E)-geranyl diphosphate = terpinolene + diphosphate. It functions in the pathway terpene metabolism; oleoresin biosynthesis. It participates in secondary metabolite biosynthesis; terpenoid biosynthesis. In terms of biological role, monoterpene synthase (TPS) involved in the biosynthesis of monoterpene natural products included in conifer oleoresin secretions and volatile emissions; these compounds contribute to biotic and abiotic stress defense against herbivores and pathogens. Catalyzes the conversion of (2E)-geranyl diphosphate (GPP) to (+)-car-3-ene and, to a lower extent, to terpinolene. This is (+)-3-carene synthase 1, chloroplastic from Pinus contorta (Shore pine).